Consider the following 88-residue polypeptide: Putative sulfur carrier protein AF_0554 (88 aa).

The active-site Cysteine persulfide intermediate is C26.

Belongs to the sulfur carrier protein TusA family.

This is Putative sulfur carrier protein AF_0554 from Archaeoglobus fulgidus (strain ATCC 49558 / DSM 4304 / JCM 9628 / NBRC 100126 / VC-16).